The chain runs to 84 residues: Exodeoxyribonuclease 7 small subunit (84 aa).

It belongs to the XseB family. As to quaternary structure, heterooligomer composed of large and small subunits.

Its subcellular location is the cytoplasm. The catalysed reaction is Exonucleolytic cleavage in either 5'- to 3'- or 3'- to 5'-direction to yield nucleoside 5'-phosphates.. Functionally, bidirectionally degrades single-stranded DNA into large acid-insoluble oligonucleotides, which are then degraded further into small acid-soluble oligonucleotides. This Yersinia enterocolitica serotype O:8 / biotype 1B (strain NCTC 13174 / 8081) protein is Exodeoxyribonuclease 7 small subunit.